The primary structure comprises 167 residues: uncharacterized protein (167 aa).

4 helical membrane-spanning segments follow: residues Leu13–Ile33, Val37–Tyr57, Trp61–Glu81, and Leu103–Ser123.

Its subcellular location is the cell membrane. This is an uncharacterized protein from Haemophilus influenzae (strain ATCC 51907 / DSM 11121 / KW20 / Rd).